Reading from the N-terminus, the 146-residue chain is Hemoglobin subunit beta (146 aa).

The 145-residue stretch at 2–146 (QWAAEEKQLI…VAHALARKYH (145 aa)) folds into the Globin domain. Heme b is bound by residues H63 and H92.

This sequence belongs to the globin family. In terms of assembly, heterotetramer of two alpha chains and two beta chains. Red blood cells.

In terms of biological role, involved in oxygen transport from the lung to the various peripheral tissues. The protein is Hemoglobin subunit beta (HBB) of Accipiter gentilis (Northern goshawk).